We begin with the raw amino-acid sequence, 95 residues long: Mitochondrial import inner membrane translocase subunit Tim13 (95 aa).

A Twin CX3C motif motif is present at residues 46 to 69; it reads CFKKCIGKPGSTLDNSEQKCIAMC. Cystine bridges form between C46–C69 and C50–C65.

It belongs to the small Tim family. In terms of assembly, heterohexamer; composed of 3 copies of TIMM8 (TIMM8A or TIMM8B) and 3 copies of TIMM13, named soluble 70 kDa complex. Associates with the TIM22 complex, whose core is composed of TIMM22.

It is found in the mitochondrion inner membrane. Its function is as follows. Mitochondrial intermembrane chaperone that participates in the import and insertion of some multi-pass transmembrane proteins into the mitochondrial inner membrane. Also required for the transfer of beta-barrel precursors from the TOM complex to the sorting and assembly machinery (SAM complex) of the outer membrane. Acts as a chaperone-like protein that protects the hydrophobic precursors from aggregation and guide them through the mitochondrial intermembrane space. The TIMM8-TIMM13 complex mediates the import of some proteins while the predominant TIMM9-TIMM10 70 kDa complex mediates the import of much more proteins. The sequence is that of Mitochondrial import inner membrane translocase subunit Tim13 (timm13) from Danio rerio (Zebrafish).